Consider the following 660-residue polypeptide: Threonine--tRNA ligase (660 aa).

The TGS domain maps to 1–64 (MSHSVSLTFP…TEGRIEIVTR (64 aa)). The catalytic stretch occupies residues 245–547 (DHRRLGREMD…LLENFAGHMP (303 aa)). Zn(2+) contacts are provided by cysteine 341, histidine 392, and histidine 524.

Belongs to the class-II aminoacyl-tRNA synthetase family. Homodimer. Zn(2+) serves as cofactor.

The protein localises to the cytoplasm. The catalysed reaction is tRNA(Thr) + L-threonine + ATP = L-threonyl-tRNA(Thr) + AMP + diphosphate + H(+). Catalyzes the attachment of threonine to tRNA(Thr) in a two-step reaction: L-threonine is first activated by ATP to form Thr-AMP and then transferred to the acceptor end of tRNA(Thr). Also edits incorrectly charged L-seryl-tRNA(Thr). This chain is Threonine--tRNA ligase, found in Sinorhizobium medicae (strain WSM419) (Ensifer medicae).